The chain runs to 630 residues: Subtilisin-like protease 1 (630 aa).

Residues 1–25 (MVLTRRAALLLCPWVIQLVIKRTLA) form the signal peptide. A propeptide spans 26–202 (GDILPNEGKK…IESDKLVGAD (177 aa)) (inhibition peptide). Residues 72-125 (NAYNPDRDAPKEELQKLQDQQETPSKQPNNLRNSPQKRAEKKESPGKNKKSLRL) form a disordered region. The span at 76-87 (PDRDAPKEELQK) shows a compositional bias: basic and acidic residues. Positions 94–107 (TPSKQPNNLRNSPQ) are enriched in polar residues. Residues 108–117 (KRAEKKESPG) show a composition bias toward basic and acidic residues. 5 residues coordinate Ca(2+): glutamate 129, asparagine 130, threonine 133, proline 135, and glycine 190. Residues 230-254 (LEVPSGESPPSHAASSGSPFDDDDD) are disordered. Over residues 233-248 (PSGESPPSHAASSGSP) the composition is skewed to low complexity. Residue aspartate 281 coordinates Ca(2+). The Peptidase S8 domain occupies 287–604 (QWGLDLARLD…GGYVDILRAV (318 aa)). Cystine bridges form between cysteine 313/cysteine 423, cysteine 402/cysteine 419, and cysteine 465/cysteine 478. Aspartate 316 acts as the Charge relay system in catalysis. Ca(2+)-binding residues include aspartate 325, glutamate 336, arginine 340, valine 343, aspartate 344, aspartate 345, aspartate 346, asparagine 348, valine 350, aspartate 352, and aspartate 353. Histidine 372 (charge relay system) is an active-site residue. Valine 383, asparagine 386, isoleucine 388, and isoleucine 390 together coordinate Ca(2+). An N-linked (GlcNAc...) asparagine glycan is attached at asparagine 546. Residue serine 549 is the Charge relay system of the active site.

It belongs to the peptidase S8 family. In terms of assembly, heterodimer between p54 form and prodomain p31; the interaction inhibits p54 catalytic activity. Heterodimer p31-p54 is monomeric at basic pH and dimeric at acidic pH; dimerization is driven by the N-terminal prodomain (p31). The cofactor is Ca(2+). The prodomain (p31) is cleaved, probably by autocatalysis, and remains non-covalently associated with the p54 form as an inhibitor. p54 is further cleaved into the p45/p47 forms. In terms of processing, the relevance of the N-glycosylation is not clear. In an insect expression system, SUB1 glycosylation appears to affect its processing into the active mature form suggesting that SUB1 may not be N-glycosylated in parasites.

It is found in the secreted. The protein resides in the parasitophorous vacuole lumen. The enzyme catalyses Hydrolysis of proteins with broad specificity for peptide bonds, and a preference for a large uncharged residue in P1. Hydrolyzes peptide amides.. Inhibited by peptidic alpha-ketoamide inhibitors. Inhibited by the alpha-ketoamide nonapeptide JMV5126 (isocaproyl-KITAQ(CO)DDEE-NH2). Inhibited by the alpha-ketoamide peptide MAM-117. Functionally, serine protease which plays an essential role in merozoite invasion of and egress from host erythrocytes by processing and activating various merozoite surface and parasitophorous vacuole proteins. The chain is Subtilisin-like protease 1 from Plasmodium vivax.